The sequence spans 503 residues: MSEDYVLEMIDITKEFPGVKALDGVQLKVKRGTVHALMGENGAGKSTLMKILIGIYTPDRGKIILDGEELKVSTIKHALDRGISMIHQELSPVPNMTVAENIFLGREPSYPFAGWVKMKELVKKTRQLFERLEIDIDPNAKMADLSIANMQMVEIAKAISYHSKLIIMDEPTSAITEKEVHHLFRIIRSLKKEGVSIIYITHKMDELEQITDEVTVLRDGKYIGTKPSHQMTRDELIQMMVGRELNQIFHKPKVPIGEVALSVQGLTKKGKFHDVSFEVRKGEIVGFAGLMGSGRTEVLESVFGVTKPDAGDIYVHGKKATIRSTRDAIRYGMGLLTEDRKLTGLFLPLSVEDNMITVTVNQYTKAGFLQQRKIREDCQRLAEQLSIKTPSLQQLIKYLSGGNQQKALIARWLLHNPDILFLDEPTRGIDVGAKAEIYHLIFELAKNGKAIIVVSSEMPEILGLSDRVIVMHEGRKMGELTREEATQERIMQLATGQLIETKR.

2 ABC transporter domains span residues 7–244 (LEMI…VGRE) and 254–498 (VPIG…TGQL). Residue 39 to 46 (GENGAGKS) coordinates ATP.

Belongs to the ABC transporter superfamily. Carbohydrate importer 2 (CUT2) (TC 3.A.1.2) family.

Its subcellular location is the cell membrane. It carries out the reaction D-ribose(out) + ATP + H2O = D-ribose(in) + ADP + phosphate + H(+). The catalysed reaction is D-galactose(out) + ATP + H2O = D-galactose(in) + ADP + phosphate + H(+). Functionally, part of an ABC transporter complex involved in carbohydrate import. Could be involved in ribose, galactose and/or methyl galactoside import. Responsible for energy coupling to the transport system. This is Putative ribose/galactose/methyl galactoside import ATP-binding protein from Geobacillus kaustophilus (strain HTA426).